We begin with the raw amino-acid sequence, 319 residues long: Glutathione synthetase (319 aa).

The 187-residue stretch at 125–311 (EKLFATLFPQ…IGGLLMDAIE (187 aa)) folds into the ATP-grasp domain. Residue 151–208 (FAEQQGDVILKPLDGMGGASIFRHRAGDPNLSVILETLTAHGTQQIMAQGYLPAIKDG) participates in ATP binding. Positions 282 and 284 each coordinate Mg(2+).

Belongs to the prokaryotic GSH synthase family. Mg(2+) serves as cofactor. It depends on Mn(2+) as a cofactor.

It carries out the reaction gamma-L-glutamyl-L-cysteine + glycine + ATP = glutathione + ADP + phosphate + H(+). It functions in the pathway sulfur metabolism; glutathione biosynthesis; glutathione from L-cysteine and L-glutamate: step 2/2. The sequence is that of Glutathione synthetase from Pseudomonas syringae pv. tomato (strain ATCC BAA-871 / DC3000).